A 174-amino-acid chain; its full sequence is uncharacterized protein (174 aa).

The protein belongs to the archaeal NMN adenylyltransferase family.

This is an uncharacterized protein from Archaeoglobus fulgidus (strain ATCC 49558 / DSM 4304 / JCM 9628 / NBRC 100126 / VC-16).